The sequence spans 335 residues: L-carnitine dehydrogenase (335 aa).

Residue 29–34 (GTGVIG) coordinates NAD(+).

Belongs to the 3-hydroxyacyl-CoA dehydrogenase family. L-carnitine dehydrogenase subfamily. In terms of assembly, homodimer.

The protein localises to the cytoplasm. It carries out the reaction carnitine + NAD(+) = 3-dehydrocarnitine + NADH + H(+). The protein operates within amine and polyamine metabolism; carnitine metabolism. Catalyzes the NAD(+)-dependent oxidation of L-carnitine to 3-dehydrocarnitine. This chain is L-carnitine dehydrogenase, found in Streptomyces griseus subsp. griseus (strain JCM 4626 / CBS 651.72 / NBRC 13350 / KCC S-0626 / ISP 5235).